The following is a 475-amino-acid chain: MSENTVMPIVRVAVLAAGDDGGRLTEMALPSELPLREILPAVQRIVQPARENDGAADPAAAPNPVRLSLAPIGGAPFSLDATLDTVGVVDGDLLALQAVPSGPPAPRIVEDIADAAVIFSEARRRQWGPTHIARGAALALIGLILVGTGLSVAHRVITGDLLGQFIVSGIALATVIAALAVRNRSAVLATSLAVTALVPVAAAFALGVPGDFGAPNVLLAAAGVAAWSLISMAGSPDDRGIAVFTATAVTGVGVLLVAGAASLWVISSDVIGCALVLLGLIVTVQAAQLSAMWARFPLPVIPAPGDPTPAARPLSVLADLPRRVRVSQAHQTGVIAAGVLLGVAGSVALVSSANASPWAWYIVVAAAAGAALRARVWDSAACKAWLLGHSYLLAVALLVAFVIGDRYQAALWALAALAVLVLVWIVAALNPKIASPDTYSLPMRRMVGFLATGLDASLIPVMALLVGLFSLVLDR.

11 helical membrane-spanning segments follow: residues 132–152 (IARG…GLSV), 161–181 (LLGQ…ALAV), 186–206 (AVLA…AFAL), 212–232 (FGAP…LISM), 241–261 (IAVF…AGAA), 264–284 (WVIS…IVTV), 333–353 (GVIA…VSSA), 354–374 (NASP…ALRA), 384–404 (AWLL…FVIG), 409–429 (AALW…VAAL), and 453–473 (GLDA…SLVL).

It belongs to the EccD/Snm4 family. As to quaternary structure, part of the ESX-3 / type VII secretion system (T7SS), which is composed of cytosolic and membrane components. The ESX-3 membrane complex is composed of EccB3, EccC3, EccD3 and EccE3.

It localises to the cell inner membrane. Functionally, part of the ESX-3 specialized secretion system, which is required for siderophore-mediated iron acquisition and for the secretion of EsxH and EsxG. In Mycolicibacterium smegmatis (strain ATCC 700084 / mc(2)155) (Mycobacterium smegmatis), this protein is ESX-3 secretion system protein EccD3.